The chain runs to 90 residues: Probable Fe(2+)-trafficking protein (90 aa).

Belongs to the Fe(2+)-trafficking protein family.

Functionally, could be a mediator in iron transactions between iron acquisition and iron-requiring processes, such as synthesis and/or repair of Fe-S clusters in biosynthetic enzymes. This is Probable Fe(2+)-trafficking protein from Pseudomonas aeruginosa (strain UCBPP-PA14).